Here is a 592-residue protein sequence, read N- to C-terminus: MTVEQKFGLFSAEIKEADPLAASEASQPKPCPPEVTPHYIWIDFLVQRFEIAKYCSSDQVEIFSSLLQRSMSLNIGRAKGSMNRHVAAIGPRFKLLTLGLSLLHADVVPNATIRNVLREKIYSTAFDYFSCPPKFPTQGEKRLREDISIMIKFWTAMFSDKKYLTASQLVPPADIGDLLEQLVEENTGSLSGPAKDFYQRGFDFFNKITNVSAVIKPYPKGDERKKACLSALSEVTVQPGCSLPSNPEAIVLDVDYKSGTPMQSAAKAPYLAKFKVKRCGVSELEKEGLRCRSDSEDECSTQEADGQKISWQAAIFKLGDDCRQKSYWGARMPTDRILRLPASQDMLALQIIDLFKNIFQLVGLDLFVFPYRVVATAPGCGVIECIPDCTSRDQLGRQTDFGMYDYFTRQYGDESTLAFQQARYNFIRSMAAYSLLLFLLQIKDRHNGNIMLDKKGHIIHIDFGFMFESSPGGNLGWEPDIKLTDEMVMIMGGKMEATPFKWFMEMCVQATWLCGEPGPYMDVVVSLVTIMLDTGLPCFRGQTIKLLKHRFSPNMTEREAANFIMKVIQSCFLSNRSRTYNMIQYYQNDIPY.

The tract at residues 180–318 (EQLVEENTGS…ISWQAAIFKL (139 aa)) is pleckstrin homology (PH) domain conferring phosphoinositide binding specificity. A PI3K/PI4K catalytic domain is found at 275 to 576 (KVKRCGVSEL…VIQSCFLSNR (302 aa)). Positions 281–287 (VSELEKE) are G-loop. Positions 441–449 (QIKDRHNGN) are catalytic loop. Residues 460–484 (HIDFGFMFESSPGGNLGWEPDIKLT) are activation loop.

Belongs to the PI3/PI4-kinase family. Type III PI4K subfamily.

This Homo sapiens (Human) protein is Putative phosphatidylinositol 4-kinase alpha-like protein P2 (PI4KAP2).